The chain runs to 529 residues: Transcription factor kayak (529 aa).

Residues 118-134 (LQGTDSDNSNASWADAQ) show a composition bias toward polar residues. Disordered regions lie at residues 118 to 166 (LQGT…SVNG) and 180 to 239 (NAGR…CRKR). Low complexity-rich tracts occupy residues 142–153 (TDTSSAHTDSTS) and 182–201 (GRGS…TPAR). Positions 219 to 282 (EEKRRIRRER…NQLEFFLRAH (64 aa)) constitute a bZIP domain. Positions 221 to 240 (KRRIRRERNKQAAARCRKRR) are basic motif. The leucine-zipper stretch occupies residues 247–275 (LTYEVEQLEKKRDGLKKEMETLTDVKNQL). Disordered regions lie at residues 311 to 390 (AGSC…PMST) and 493 to 529 (DGGT…LVSL). Low complexity predominate over residues 315 to 332 (DSGSSSHHNNNSNDSSNG). Positions 340–350 (SLNSTGRSNSP) are enriched in polar residues. Ser349 is subject to Phosphoserine. The segment covering 363-375 (DGGLDSSCLLDQD) has biased composition (low complexity). The segment covering 376–387 (GPPPSKRFPLPP) has biased composition (pro residues).

This sequence belongs to the bZIP family. Fos subfamily. In terms of assembly, homodimer. Heterodimer with Jra. The kay-Jra heterodimer binds more stably to the AP-1 site than either of the two proteins alone.

The protein localises to the nucleus. Developmentally regulated transcription factor AP-1 binds and recognizes the enhancer DNA sequence: 5'-TGA[CG]TCA-3'. May play a role in the function or determination of a particular subset of cells in the developing embryo. Is able to carry out its function either independently of or in conjunction with Jra. This chain is Transcription factor kayak, found in Drosophila ananassae (Fruit fly).